We begin with the raw amino-acid sequence, 346 residues long: GTPase Obg (346 aa).

One can recognise an Obg domain in the interval 1 to 159 (MKFLDEAKVY…RWIWLRLKLI (159 aa)). An OBG-type G domain is found at 160-327 (ADAGLVGLPN…ALRALVAVIG (168 aa)). GTP-binding positions include 166-173 (GLPNAGKS), 191-195 (FTTLH), 212-215 (DIPG), 279-282 (NKID), and 308-310 (SAA). 2 residues coordinate Mg(2+): Ser173 and Thr193.

This sequence belongs to the TRAFAC class OBG-HflX-like GTPase superfamily. OBG GTPase family. Monomer. It depends on Mg(2+) as a cofactor.

It localises to the cytoplasm. An essential GTPase which binds GTP, GDP and possibly (p)ppGpp with moderate affinity, with high nucleotide exchange rates and a fairly low GTP hydrolysis rate. Plays a role in control of the cell cycle, stress response, ribosome biogenesis and in those bacteria that undergo differentiation, in morphogenesis control. This Bradyrhizobium diazoefficiens (strain JCM 10833 / BCRC 13528 / IAM 13628 / NBRC 14792 / USDA 110) protein is GTPase Obg.